The chain runs to 592 residues: AT-rich interactive domain-containing protein 5A (592 aa).

A disordered region spans residues 1–53 (MAPPVKGKRKQSEEGEPLDPPVSPQPDGEPRSRSPVRLEEPPEAGREREEEQE). The segment at 1-299 (MAPPVKGKRK…AAPPLESPQS (299 aa)) is interaction with SOX9. At S23 the chain carries Phosphoserine. Residues 28–49 (GEPRSRSPVRLEEPPEAGRERE) show a composition bias toward basic and acidic residues. Residues 52–144 (QEEEQAFLVS…LVLPYVRHLK (93 aa)) form the ARID domain. Glycyl lysine isopeptide (Lys-Gly) (interchain with G-Cter in ubiquitin) cross-links involve residues K82 and K91. Positions 143–225 (LKGEDDKPLP…RGPAAGPSLP (83 aa)) are disordered. Residues 162-186 (MAKEPRGDDGATERPKKVKEEKRVD) are compositionally biased toward basic and acidic residues. S253 bears the Phosphoserine mark. The segment at 277–333 (CRHGAGGEPQAPPAAPPLESPQSPGGPAEDSRHRLTPLEGRQAPGGGLWGETQAGPR) is disordered. Positions 286–295 (QAPPAAPPLE) are enriched in pro residues. S438 and S463 each carry phosphoserine.

As to quaternary structure, interacts with SOX9. Interacts with ESR1. Interacts with RORC. In terms of processing, phosphorylated by MAPK14 on serine residues involving a TLR4 signaling pathway upon lipopolysaccharide (LPS) stimulation leading to its ubiquitination and proteasomal degradation. Ubiquitinated leading to proteasomal degradation; involving WWP1 linked to MAPK14-mediated phosphorylation upon LPS stimulation.

The protein localises to the nucleus. Its function is as follows. DNA-binding protein that may regulate transcription and act as a repressor by binding to AT-rich stretches in the promoter region of target genes. May act as repressor and down-regulate enhancer-dependent gene expressison. May positively regulate chondrocyte-specific transcription such as of COL2A1 in collaboration with SOX9 and positively regulate histone H3 acetylation at chondrocyte-specific genes. May stimulate early-stage chondrocyte differentiation and inhibit later stage differention. Can repress ESR1-mediated transcriptional activation; proposed to act as corepressor for selective nuclear hormone receptors. As an RNA-binding protein, involved in the regulation of inflammatory response by stabilizing selective inflammation-related mRNAs, such as STAT3 and TBX21. Also stabilizes IL6 mRNA. Binds to stem loop structures located in the 3'UTRs of IL6, STAT3 and TBX21 mRNAs; at least for STAT3 prevents binding of ZC3H12A to the mRNA stem loop structure thus inhibiting its degradation activity. Contributes to elevated IL6 levels possibly implicated in autoimmunity processes. IL6-dependent stabilization of STAT3 mRNA may promote differentiation of naive CD4+ T-cells into T-helper Th17 cells. In CD4+ T-cells may also inhibit RORC-induced Th17 cell differentiation independently of IL6 signaling. Stabilization of TBX21 mRNA contributes to elevated interferon-gamma secretion in Th1 cells possibly implicated in the establishment of septic shock. Stabilizes TNFRSF4/OX40 mRNA by binding to the conserved stem loop structure in its 3'UTR; thereby competing with the mRNA-destabilizing functions of RC3H1 and endoribonuclease ZC3H12A. The chain is AT-rich interactive domain-containing protein 5A (ARID5A) from Bos taurus (Bovine).